The chain runs to 20 residues: Pregnancy-associated glycoprotein 60H (20 aa).

Asn-4 is a glycosylation site (N-linked (GlcNAc...) asparagine).

This sequence belongs to the peptidase A1 family. Chorionic epithelium (trophectoderm) and placental cotyledons.

It localises to the secreted. The protein resides in the extracellular space. This is Pregnancy-associated glycoprotein 60H from Bison bonasus (European bison).